The sequence spans 64 residues: Orcokinin peptides (64 aa).

Propeptides lie at residues methionine 1–glycine 6 and asparagine 23–isoleucine 24.

Belongs to the orcokinin family. Orcokinin-3 is expressed throughout the central nervous system (at protein level).

It is found in the secreted. Functionally, myotropic peptides. In Camponotus floridanus (Florida carpenter ant), this protein is Orcokinin peptides.